The following is a 398-amino-acid chain: Signal-regulatory protein beta-1 isoform 3 (398 aa).

The first 29 residues, 1–29 (MPVPASWPHLPSPFLLMTLLLGRLTGVAG), serve as a signal peptide directing secretion. Residues 30–371 (EEELQVIQPD…GPALASAAPL (342 aa)) are Extracellular-facing. Residues 31 to 136 (EELQVIQPDK…SPDHVEFKSG (106 aa)) form the Ig-like V-type domain. 2 cysteine pairs are disulfide-bonded: Cys54–Cys120 and Cys169–Cys227. Ig-like C1-type domains are found at residues 147–246 (PSAP…ANLS) and 253–347 (PTLE…HDLK). N-linked (GlcNAc...) asparagine glycosylation is found at Asn244, Asn291, and Asn318. Cysteines 272 and 330 form a disulfide. Over residues 337 to 354 (QPAVSKSHDLKVSAHPKE) the composition is skewed to basic and acidic residues. A disordered region spans residues 337-361 (QPAVSKSHDLKVSAHPKEQGSNTAP). A helical transmembrane segment spans residues 372-392 (LIAFLLGPKVLLVVGVSVIYV). At 393-398 (YWKQKA) the chain is on the cytoplasmic side.

Its subcellular location is the membrane. Functionally, immunoglobulin-like cell surface receptor involved in the negative regulation of receptor tyrosine kinase-coupled signaling processes. This chain is Signal-regulatory protein beta-1 isoform 3 (SIRPB1), found in Homo sapiens (Human).